We begin with the raw amino-acid sequence, 1070 residues long: 3',5'-cyclic-AMP phosphodiesterase (1070 aa).

4 disordered regions span residues 1–91, 166–215, 487–516, and 615–653; these read MSQE…KQDS, STSI…TRFQ, VPASNKSRRPNQSSSASRSGNPPGAPLSQG, and SAGQYARSRSPRGPPMSQISGVKRPLSHTNSFTGERLPT. Residues 51–69 are compositionally biased toward low complexity; sequence KQVQVQSQKFSSTSSTTKV. Positions 70 to 84 are enriched in polar residues; it reads ATHSFSMSSSAGTTG. Positions 166-210 are enriched in low complexity; the sequence is STSIITSSEQRTSTSTSSSSSTRYIASGSSNLAGGNSNSASSASS. Polar residues predominate over residues 488–506; sequence PASNKSRRPNQSSSASRSG. The PDEase domain occupies 656–985; it reads VETPRENELG…DYYQSMIPPS (330 aa). The active-site Proton donor is His-732. 732-736 provides a ligand contact to 3',5'-cyclic AMP; sequence HNSLH. The a divalent metal cation site is built by His-736, His-772, Asp-773, and Asp-890. 3',5'-cyclic AMP is bound by residues Asp-773, Asp-890, and Gln-941. Positions 1007–1024 are enriched in acidic residues; sequence EESDQENLAELEEGDESG. A disordered region spans residues 1007-1070; the sequence is EESDQENLAE…CQNQPQHGGM (64 aa). The segment covering 1025-1042 has biased composition (low complexity); sequence GESTTTGTTGTTAASALS. The segment covering 1043–1054 has biased composition (gly residues); that stretch reads GAGGGGGGGGGM. The segment covering 1060–1070 has biased composition (polar residues); the sequence is GCQNQPQHGGM.

Belongs to the cyclic nucleotide phosphodiesterase family. PDE4 subfamily. In terms of assembly, monomer. A divalent metal cation serves as cofactor.

The catalysed reaction is 3',5'-cyclic AMP + H2O = AMP + H(+). It functions in the pathway purine metabolism; 3',5'-cyclic AMP degradation; AMP from 3',5'-cyclic AMP: step 1/1. Functionally, hydrolyzes the second messenger cAMP, which is a key regulator of many important physiological processes. Vital for female fertility. Required for learning/memory. The polypeptide is 3',5'-cyclic-AMP phosphodiesterase (dnc) (Drosophila melanogaster (Fruit fly)).